Consider the following 366-residue polypeptide: Cobalt-precorrin-5B C(1)-methyltransferase (366 aa).

It belongs to the CbiD family.

The catalysed reaction is Co-precorrin-5B + S-adenosyl-L-methionine = Co-precorrin-6A + S-adenosyl-L-homocysteine. The protein operates within cofactor biosynthesis; adenosylcobalamin biosynthesis; cob(II)yrinate a,c-diamide from sirohydrochlorin (anaerobic route): step 6/10. In terms of biological role, catalyzes the methylation of C-1 in cobalt-precorrin-5B to form cobalt-precorrin-6A. The protein is Cobalt-precorrin-5B C(1)-methyltransferase of Pseudomonas aeruginosa (strain UCBPP-PA14).